The following is a 184-amino-acid chain: ATP synthase subunit b, chloroplastic (184 aa).

A helical membrane pass occupies residues 27-49 (LATNPINLSVVLGVLIFFGKGVL).

It belongs to the ATPase B chain family. As to quaternary structure, F-type ATPases have 2 components, F(1) - the catalytic core - and F(0) - the membrane proton channel. F(1) has five subunits: alpha(3), beta(3), gamma(1), delta(1), epsilon(1). F(0) has four main subunits: a(1), b(1), b'(1) and c(10-14). The alpha and beta chains form an alternating ring which encloses part of the gamma chain. F(1) is attached to F(0) by a central stalk formed by the gamma and epsilon chains, while a peripheral stalk is formed by the delta, b and b' chains.

It localises to the plastid. Its subcellular location is the chloroplast thylakoid membrane. In terms of biological role, f(1)F(0) ATP synthase produces ATP from ADP in the presence of a proton or sodium gradient. F-type ATPases consist of two structural domains, F(1) containing the extramembraneous catalytic core and F(0) containing the membrane proton channel, linked together by a central stalk and a peripheral stalk. During catalysis, ATP synthesis in the catalytic domain of F(1) is coupled via a rotary mechanism of the central stalk subunits to proton translocation. Its function is as follows. Component of the F(0) channel, it forms part of the peripheral stalk, linking F(1) to F(0). The chain is ATP synthase subunit b, chloroplastic from Cuscuta exaltata (Tall dodder).